The sequence spans 129 residues: MSEMTKTPTHYRLLSTLKAMGPYLREGQCSERFYLFDCLASCVNDKKSPEKREFWGWWMELTQNEQEMSACYHIGRYTLAGDWVAEAIPESAQAEVNHTQAEFHKKLVKTLRERFEISVTVSTESAPFA.

The essential for activity stretch occupies residues 99–119 (TQAEFHKKLVKTLRERFEISV).

It belongs to the Crl family.

It is found in the cytoplasm. Functionally, binds to the sigma-S subunit of RNA polymerase, activating expression of sigma-S-regulated genes. Stimulates RNA polymerase holoenzyme formation and may bind to several other sigma factors, such as sigma-70 and sigma-32. The sequence is that of Sigma factor-binding protein Crl from Vibrio cholerae serotype O1 (strain ATCC 39541 / Classical Ogawa 395 / O395).